The chain runs to 421 residues: Hydrolyase poxO (421 aa).

Catalysis depends on Ser239, which acts as the Nucleophile.

It belongs to the AB hydrolase superfamily. FUS2 hydrolase family. As to quaternary structure, homodimer.

The protein operates within secondary metabolite biosynthesis. Functionally, hydrolyase; part of the gene cluster that mediates the biosynthesis of oxaleimides, cytotoxic compounds containing an unusual disubstituted succinimide moiety. The first step of the pathway is provided by the HR-PKS poxF that serves in a new mode of collaborative biosynthesis with the PKS-NRPS poxE, by providing the olefin containing amino acid substrate via the synthesis of an ACP-bound dec-4-enoate. The cytochrome P450 monooxygenase poxM-catalyzed oxidation at the alpha-position creates the enzyme-bound 2-hydroxydec-4-enoyl-ACP thioester, which may be prone to spontaneous hydrolysis to yield 2-hydroxydec-4-enoic acid due to increased electrophilicity of the carbonyl. 2-hydroxydec-4-enoic acid can then be further oxidized by poxM to yield the alpha-ketoacid 2-oxodec-4-enoicacid, which is reductively aminated by the aminotransferase poxL to yield (S,E)-2-aminodec-4-enoic acid. The Hybrid PKS-NRPS synthetase poxE then performs condensation between the octaketide product of its PKS modules and the amino group of (S,E)-2-aminodec-4-enoic acid which is activated and incorporated by the adenylation domain. The resulting aminoacyl product can be cyclized by the Diels-Alderase PoxQ and reductively released by the reductive (R) domain of poxE to yield an aldehyde intermediate. The released aldehyde is then substrate for a Knoevenagel condensation by the hydrolyase poxO followed by an oxidation at the 5-position of the pyrrolidone ring. The presence of the olefin from the amino acid building block allows for migration of the substituted allyl group to occur. This allylic transposition reaction takes place in a conjugate addition, semipinacol-like fashion to yield a succinimide intermediate. Iterative two-electron oxidations of the C7 methyl of the succinimide intermediate to the carboxylic acid can be catalyzed by one of two remaining cytochrome P450 monooxygenasess poxC or poxD to yield oxaleimide A. Subsequent oxidation yields the maleimide scaffold oxaleimide I. Both oxaleimide A and oxaleimide I can undergo oxidative modifications in the decalin ring to yield the series of products oxaleimides B to H. The chain is Hydrolyase poxO from Penicillium oxalicum (strain 114-2 / CGMCC 5302) (Penicillium decumbens).